The sequence spans 433 residues: Type I acyl-CoA thioesterase mpaH (433 aa).

Residues 58–246 (HGVGLPKELY…VKARFDAAAD (189 aa)) are abhydrolase domain. V60 contributes to the substrate binding site. The Nucleophile role is filled by S139. F140 contributes to the substrate binding site. Residues D163 and H365 contribute to the active site.

It belongs to the AB hydrolase superfamily. MpaH hydrolase family. As to quaternary structure, homodimer.

The protein resides in the peroxisome matrix. The catalysed reaction is mycophenolyl-CoA + H2O = mycophenolate + CoA + H(+). The protein operates within secondary metabolite biosynthesis; terpenoid biosynthesis. Functionally, type I acyl-CoA thioesterase; part of the gene cluster that mediates the biosynthesis of mycophenolic acid (MPA), the first isolated antibiotic natural product in the world obtained from a culture of Penicillium brevicompactum in 1893. MpaH acts as a peroxisomal acyl-CoA hydrolase that converts MPA-CoA into the final product MPA. The first step of the pathway is the synthesis of 5-methylorsellinic acid (5MOA) by the cytosolic polyketide synthase mpaC. 5MOA is then converted to the phthalide compound 5,7-dihydroxy-4,6-dimethylphthalide (DHMP) by the endoplasmic reticulum-bound cytochrome P450 monooxygenase mpaDE. MpaDE first catalyzes hydroxylation of 5-MOA to 4,6-dihydroxy-2-(hydroxymethyl)-3-methylbenzoic acid (DHMB). MpaDE then acts as a lactone synthase that catalyzes the ring closure to convert DHMB into DHMP. The next step is the prenylation of DHMP by the Golgi apparatus-associated prenyltransferase mpaA to yield farnesyl-DHMP (FDHMP). The ER-bound oxygenase mpaB then mediates the oxidative cleavage the C19-C20 double bond in FDHMP to yield FDHMP-3C via a mycophenolic aldehyde intermediate. The O-methyltransferase mpaG catalyzes the methylation of FDHMP-3C to yield MFDHMP-3C. After the cytosolic methylation of FDHMP-3C, MFDHMP-3C enters into peroxisomes probably via free diffusion due to its low molecular weight. Upon a peroxisomal CoA ligation reaction, catalyzed by a beta-oxidation component enzyme acyl-CoA ligase ACL891, MFDHMP-3C-CoA would then be restricted to peroxisomes for the following beta-oxidation pathway steps. The peroxisomal beta-oxidation machinery than converts MFDHMP-3C-CoA into MPA_CoA, via a beta-oxidation chain-shortening process. Finally mpaH acts as a peroxisomal acyl-CoA hydrolase with high substrate specificity toward MPA-CoA to release the final product MPA. This is Type I acyl-CoA thioesterase mpaH from Penicillium roqueforti (strain FM164).